The chain runs to 108 residues: Nucleoid-associated protein GWCH70_0020 (108 aa).

Residues 1–34 (MMRGGMGNMQKMMKQMQKMQKEMQKAQEQLAEKT) are disordered. Residues 9–18 (MQKMMKQMQK) show a composition bias toward low complexity. Basic and acidic residues predominate over residues 19-34 (MQKEMQKAQEQLAEKT).

It belongs to the YbaB/EbfC family. As to quaternary structure, homodimer.

The protein localises to the cytoplasm. The protein resides in the nucleoid. Its function is as follows. Binds to DNA and alters its conformation. May be involved in regulation of gene expression, nucleoid organization and DNA protection. The chain is Nucleoid-associated protein GWCH70_0020 from Geobacillus sp. (strain WCH70).